The primary structure comprises 215 residues: Ribonuclease T (215 aa).

Residues 20–194 form the Exonuclease domain; that stretch reads VVIDVETAGF…YDTERTAVLF (175 aa). Asp-23, Glu-25, His-181, and Asp-186 together coordinate Mg(2+). Residue His-181 is the Proton donor/acceptor of the active site.

This sequence belongs to the RNase T family. In terms of assembly, homodimer. It depends on Mg(2+) as a cofactor.

Trims short 3' overhangs of a variety of RNA species, leaving a one or two nucleotide 3' overhang. Responsible for the end-turnover of tRNA: specifically removes the terminal AMP residue from uncharged tRNA (tRNA-C-C-A). Also appears to be involved in tRNA biosynthesis. This Salmonella paratyphi A (strain ATCC 9150 / SARB42) protein is Ribonuclease T.